Here is a 549-residue protein sequence, read N- to C-terminus: RNA-induced transcriptional silencing complex protein tas3 (549 aa).

5 disordered regions span residues 89–111 (KNSP…VRAS), 126–184 (DGKE…SDSI), 202–225 (IRSS…SSKS), 298–361 (LDNF…HLEK), and 381–430 (AHFH…PLAS). The segment covering 298-307 (LDNFNRPSQQ) has biased composition (polar residues). Composition is skewed to basic and acidic residues over residues 328-361 (YDSY…HLEK) and 403-416 (SDRQ…ELPT). The segment covering 419–430 (LNASDSHNPLAS) has biased composition (polar residues).

In terms of assembly, ago1, chp1 and tas3 interact to form the core of the RNA-induced transcriptional silencing (RITS) complex. The RITS complex interacts with the RDRC complex via interaction between ago1 and hrr1. Clr4 has a role in mediating this interaction.

The protein resides in the nucleus. Its subcellular location is the cytoplasm. It is found in the cytoskeleton. It localises to the microtubule organizing center. The protein localises to the spindle pole body. Functionally, has a role in the RNA interference (RNAi) pathway which is important for heterochromatin formation and accurate chromosome segregation. A member of the RNA-induced transcriptional silencing (RITS) complex which is involved in the biosynthesis of dsRNA from primer siRNAs provided by the RNA-directed RNA polymerase (RDRC) complex. This Schizosaccharomyces pombe (strain 972 / ATCC 24843) (Fission yeast) protein is RNA-induced transcriptional silencing complex protein tas3 (tas3).